Here is a 214-residue protein sequence, read N- to C-terminus: Large ribosomal subunit protein eL14 (214 aa).

Lys79 carries the N6-acetyllysine modification. Lys85 is modified (N6-acetyllysine; alternate). Lys85 carries the N6-succinyllysine; alternate modification. Lys124 participates in a covalent cross-link: Glycyl lysine isopeptide (Lys-Gly) (interchain with G-Cter in SUMO2). Residue Ser139 is modified to Phosphoserine. A disordered region spans residues 161–214 (PAKKITTEGKKAPAQKAPAQKAAGQKAAPPPKTQKGQKAPSQKAPAPKASGKKA). The stretch at 170 to 174 (KKAPA) is one 1-1; approximate repeat. The segment at 170–189 (KKAPAQKAPAQKAAGQKAAP) is 4 X 5 AA tandem repeats of Q-K-A-[APS]-X. Residues 172–214 (APAQKAPAQKAAGQKAAPPPKTQKGQKAPSQKAPAPKASGKKA) show a composition bias toward low complexity. 5 consecutive repeat copies span residues 175–179 (QKAPA), 180–184 (QKAAG), 185–189 (QKAAP), 192–194 (KTQ), and 195–197 (KGQ). Residues 192–197 (KTQKGQ) are 2 X 3 AA tandem repeats of K-G-Q. An N6-succinyllysine modification is found at Lys203.

This sequence belongs to the eukaryotic ribosomal protein eL14 family. Component of the large ribosomal subunit.

The protein resides in the cytoplasm. In terms of biological role, component of the large ribosomal subunit. The ribosome is a large ribonucleoprotein complex responsible for the synthesis of proteins in the cell. In Bos taurus (Bovine), this protein is Large ribosomal subunit protein eL14 (RPL14).